The primary structure comprises 66 residues: Large ribosomal subunit protein uL29 (66 aa).

This sequence belongs to the universal ribosomal protein uL29 family.

The polypeptide is Large ribosomal subunit protein uL29 (Rhizobium meliloti (strain 1021) (Ensifer meliloti)).